The following is a 173-amino-acid chain: CDP-archaeol synthase (173 aa).

5 consecutive transmembrane segments (helical) span residues Gly15–Gly35, Gly59–Gly79, Ala84–Val104, Val118–Trp138, and Gly142–Ile162.

It belongs to the CDP-archaeol synthase family. Requires Mg(2+) as cofactor.

It is found in the cell membrane. It catalyses the reaction 2,3-bis-O-(geranylgeranyl)-sn-glycerol 1-phosphate + CTP + H(+) = CDP-2,3-bis-O-(geranylgeranyl)-sn-glycerol + diphosphate. Its pathway is membrane lipid metabolism; glycerophospholipid metabolism. Functionally, catalyzes the formation of CDP-2,3-bis-(O-geranylgeranyl)-sn-glycerol (CDP-archaeol) from 2,3-bis-(O-geranylgeranyl)-sn-glycerol 1-phosphate (DGGGP) and CTP. This reaction is the third ether-bond-formation step in the biosynthesis of archaeal membrane lipids. The sequence is that of CDP-archaeol synthase from Methanopyrus kandleri (strain AV19 / DSM 6324 / JCM 9639 / NBRC 100938).